Here is a 202-residue protein sequence, read N- to C-terminus: Ribosome maturation factor RimP (202 aa).

Belongs to the RimP family.

It localises to the cytoplasm. In terms of biological role, required for maturation of 30S ribosomal subunits. In Paracidovorax citrulli (strain AAC00-1) (Acidovorax citrulli), this protein is Ribosome maturation factor RimP.